Consider the following 329-residue polypeptide: Phosphate acyltransferase (329 aa).

Belongs to the PlsX family. Homodimer. Probably interacts with PlsY.

It is found in the cytoplasm. It carries out the reaction a fatty acyl-[ACP] + phosphate = an acyl phosphate + holo-[ACP]. Its pathway is lipid metabolism; phospholipid metabolism. Functionally, catalyzes the reversible formation of acyl-phosphate (acyl-PO(4)) from acyl-[acyl-carrier-protein] (acyl-ACP). This enzyme utilizes acyl-ACP as fatty acyl donor, but not acyl-CoA. In Sulfurovum sp. (strain NBC37-1), this protein is Phosphate acyltransferase.